The primary structure comprises 194 residues: Potassium-transporting ATPase KdpC subunit (194 aa).

Residues 12–34 (LFLLLLTGGVYPLLTTALGQWWF) form a helical membrane-spanning segment.

This sequence belongs to the KdpC family. As to quaternary structure, the system is composed of three essential subunits: KdpA, KdpB and KdpC.

The protein localises to the cell inner membrane. Functionally, part of the high-affinity ATP-driven potassium transport (or Kdp) system, which catalyzes the hydrolysis of ATP coupled with the electrogenic transport of potassium into the cytoplasm. This subunit acts as a catalytic chaperone that increases the ATP-binding affinity of the ATP-hydrolyzing subunit KdpB by the formation of a transient KdpB/KdpC/ATP ternary complex. The protein is Potassium-transporting ATPase KdpC subunit of Salmonella enteritidis PT4 (strain P125109).